An 81-amino-acid chain; its full sequence is ATP synthase subunit c, chloroplastic (81 aa).

2 helical membrane-spanning segments follow: residues alanine 7–glycine 27 and leucine 57–alanine 77.

This sequence belongs to the ATPase C chain family. In terms of assembly, F-type ATPases have 2 components, F(1) - the catalytic core - and F(0) - the membrane proton channel. F(1) has five subunits: alpha(3), beta(3), gamma(1), delta(1), epsilon(1). F(0) has four main subunits: a(1), b(1), b'(1) and c(10-14). The alpha and beta chains form an alternating ring which encloses part of the gamma chain. F(1) is attached to F(0) by a central stalk formed by the gamma and epsilon chains, while a peripheral stalk is formed by the delta, b and b' chains.

It is found in the plastid. The protein resides in the chloroplast thylakoid membrane. In terms of biological role, f(1)F(0) ATP synthase produces ATP from ADP in the presence of a proton or sodium gradient. F-type ATPases consist of two structural domains, F(1) containing the extramembraneous catalytic core and F(0) containing the membrane proton channel, linked together by a central stalk and a peripheral stalk. During catalysis, ATP synthesis in the catalytic domain of F(1) is coupled via a rotary mechanism of the central stalk subunits to proton translocation. Its function is as follows. Key component of the F(0) channel; it plays a direct role in translocation across the membrane. A homomeric c-ring of between 10-14 subunits forms the central stalk rotor element with the F(1) delta and epsilon subunits. The protein is ATP synthase subunit c, chloroplastic of Staurastrum punctulatum (Green alga).